The following is a 189-amino-acid chain: dCTP deaminase, dUMP-forming (189 aa).

Residues 101 to 106, Asp119, 127 to 129, Gln148, Tyr162, and Gln174 each bind dCTP; these read KSSLGR and TLE. Glu129 functions as the Proton donor/acceptor in the catalytic mechanism. The disordered stretch occupies residues 166 to 189; sequence AVGSKYQGQRGPTPSRSHLNFIKS. Residues 171 to 189 show a composition bias toward polar residues; it reads YQGQRGPTPSRSHLNFIKS.

It belongs to the dCTP deaminase family. As to quaternary structure, homotrimer.

It catalyses the reaction dCTP + 2 H2O = dUMP + NH4(+) + diphosphate. Its pathway is pyrimidine metabolism; dUMP biosynthesis; dUMP from dCTP: step 1/1. In terms of biological role, bifunctional enzyme that catalyzes both the deamination of dCTP to dUTP and the hydrolysis of dUTP to dUMP without releasing the toxic dUTP intermediate. The protein is dCTP deaminase, dUMP-forming of Mycolicibacterium smegmatis (strain ATCC 700084 / mc(2)155) (Mycobacterium smegmatis).